The sequence spans 86 residues: Large ribosomal subunit protein uL30m (86 aa).

The interval 67-86 is disordered; sequence QQRELRKSNPGFIVEKRTID.

The protein belongs to the universal ribosomal protein uL30 family. As to quaternary structure, component of the mitochondrial large ribosomal subunit (mt-LSU). Mature yeast 74S mitochondrial ribosomes consist of a small (37S) and a large (54S) subunit. The 37S small subunit contains a 15S ribosomal RNA (15S mt-rRNA) and 34 different proteins. The 54S large subunit contains a 21S rRNA (21S mt-rRNA) and 46 different proteins.

The protein resides in the mitochondrion. Its function is as follows. Component of the mitochondrial ribosome (mitoribosome), a dedicated translation machinery responsible for the synthesis of mitochondrial genome-encoded proteins, including at least some of the essential transmembrane subunits of the mitochondrial respiratory chain. The mitoribosomes are attached to the mitochondrial inner membrane and translation products are cotranslationally integrated into the membrane. This Saccharomyces cerevisiae (strain ATCC 204508 / S288c) (Baker's yeast) protein is Large ribosomal subunit protein uL30m (MRPL33).